A 369-amino-acid chain; its full sequence is tRNA 2-selenouridine synthase (369 aa).

One can recognise a Rhodanese domain in the interval 12–136 (FLDDIPLMDV…LRNFLFETTR (125 aa)). Cys-95 serves as the catalytic S-selanylcysteine intermediate.

The protein belongs to the SelU family. As to quaternary structure, monomer.

The enzyme catalyses 5-methylaminomethyl-2-thiouridine(34) in tRNA + selenophosphate + (2E)-geranyl diphosphate + H2O + H(+) = 5-methylaminomethyl-2-selenouridine(34) in tRNA + (2E)-thiogeraniol + phosphate + diphosphate. The catalysed reaction is 5-methylaminomethyl-2-thiouridine(34) in tRNA + (2E)-geranyl diphosphate = 5-methylaminomethyl-S-(2E)-geranyl-thiouridine(34) in tRNA + diphosphate. It carries out the reaction 5-methylaminomethyl-S-(2E)-geranyl-thiouridine(34) in tRNA + selenophosphate + H(+) = 5-methylaminomethyl-2-(Se-phospho)selenouridine(34) in tRNA + (2E)-thiogeraniol. It catalyses the reaction 5-methylaminomethyl-2-(Se-phospho)selenouridine(34) in tRNA + H2O = 5-methylaminomethyl-2-selenouridine(34) in tRNA + phosphate. Functionally, involved in the post-transcriptional modification of the uridine at the wobble position (U34) of tRNA(Lys), tRNA(Glu) and tRNA(Gln). Catalyzes the conversion of 2-thiouridine (S2U-RNA) to 2-selenouridine (Se2U-RNA). Acts in a two-step process involving geranylation of 2-thiouridine (S2U) to S-geranyl-2-thiouridine (geS2U) and subsequent selenation of the latter derivative to 2-selenouridine (Se2U) in the tRNA chain. The polypeptide is tRNA 2-selenouridine synthase (Pseudomonas aeruginosa (strain ATCC 15692 / DSM 22644 / CIP 104116 / JCM 14847 / LMG 12228 / 1C / PRS 101 / PAO1)).